The sequence spans 289 residues: 4-diphosphocytidyl-2-C-methyl-D-erythritol kinase (289 aa).

The active site involves K10. An ATP-binding site is contributed by 94–104 (PVAAGLAGGSS). D136 is a catalytic residue.

It belongs to the GHMP kinase family. IspE subfamily.

The enzyme catalyses 4-CDP-2-C-methyl-D-erythritol + ATP = 4-CDP-2-C-methyl-D-erythritol 2-phosphate + ADP + H(+). The protein operates within isoprenoid biosynthesis; isopentenyl diphosphate biosynthesis via DXP pathway; isopentenyl diphosphate from 1-deoxy-D-xylulose 5-phosphate: step 3/6. Functionally, catalyzes the phosphorylation of the position 2 hydroxy group of 4-diphosphocytidyl-2C-methyl-D-erythritol. In Bacillus cytotoxicus (strain DSM 22905 / CIP 110041 / 391-98 / NVH 391-98), this protein is 4-diphosphocytidyl-2-C-methyl-D-erythritol kinase.